The primary structure comprises 686 residues: Cadmium, zinc and cobalt-transporting ATPase (686 aa).

In terms of domain architecture, HMA spans methionine 1 to serine 62. The Cytoplasmic segment spans residues methionine 1–proline 72. 2 residues coordinate Cd(2+): cysteine 11 and cysteine 14. Cysteine 11 and cysteine 14 together coordinate Co(2+). Zn(2+)-binding residues include cysteine 11 and cysteine 14. The helical transmembrane segment at leucine 73–leucine 92 threads the bilayer. Over histidine 93–lysine 102 the chain is Extracellular. A helical membrane pass occupies residues alanine 103–phenylalanine 124. Residues arginine 125–glutamine 131 lie on the Cytoplasmic side of the membrane. A helical transmembrane segment spans residues phenylalanine 132–alanine 151. The Extracellular segment spans residues tyrosine 152–glutamate 154. Residues serine 155–serine 174 traverse the membrane as a helical segment. Residues arginine 175–proline 308 are Cytoplasmic-facing. A helical transmembrane segment spans residues serine 309 to glycine 327. Over serine 328 to tryptophan 332 the chain is Extracellular. The helical transmembrane segment at isoleucine 333–isoleucine 350 threads the bilayer. Residues serine 351–serine 635 lie on the Cytoplasmic side of the membrane. Aspartate 388 acts as the 4-aspartylphosphate intermediate in catalysis. The Mg(2+) site is built by aspartate 583 and aspartate 587. A helical membrane pass occupies residues isoleucine 636–methionine 657. Residues glycine 658–alanine 665 lie on the Extracellular side of the membrane. Residues valine 666–methionine 681 form a helical membrane-spanning segment. The Cytoplasmic portion of the chain corresponds to arginine 682 to alanine 686.

Belongs to the cation transport ATPase (P-type) (TC 3.A.3) family. Type IB subfamily.

Its subcellular location is the cell membrane. The enzyme catalyses Zn(2+)(in) + ATP + H2O = Zn(2+)(out) + ADP + phosphate + H(+). It carries out the reaction Cd(2+)(in) + ATP + H2O = Cd(2+)(out) + ADP + phosphate + H(+). Functionally, couples the hydrolysis of ATP with the transport of cadmium, zinc and cobalt out of the cell. This ion efflux may influence the activity of urease, which is essential for the survival of the bacterium in the gastric environment. This Helicobacter pylori (strain ATCC 700392 / 26695) (Campylobacter pylori) protein is Cadmium, zinc and cobalt-transporting ATPase (cadA).